The primary structure comprises 255 residues: Small ribosomal subunit protein eS1A (255 aa).

A compositionally biased stretch (basic residues) spans 1-18; that stretch reads MAVGKNKRLSKGKKGQKK. Residues 1–20 form a disordered region; it reads MAVGKNKRLSKGKKGQKKRV. Ala2 is subject to N-acetylalanine; partial. Residue Thr245 is modified to Phosphothreonine. Lys248 is covalently cross-linked (Glycyl lysine isopeptide (Lys-Gly) (interchain with G-Cter in ubiquitin)). A Phosphothreonine modification is found at Thr254.

Belongs to the eukaryotic ribosomal protein eS1 family. As to quaternary structure, component of the small ribosomal subunit. Mature ribosomes consist of a small (40S) and a large (60S) subunit. The 40S subunit contains about 33 different proteins and 1 molecule of RNA (18S). The 60S subunit contains about 49 different proteins and 3 molecules of RNA (25S, 5.8S and 5S).

It localises to the cytoplasm. In Saccharomyces cerevisiae (strain RM11-1a) (Baker's yeast), this protein is Small ribosomal subunit protein eS1A.